The following is a 139-amino-acid chain: Immunogenic miracidial antigen 8I' (139 aa).

Positions 61–139 are disordered; it reads IDVGDEDYHD…PKKYGSGYKH (79 aa). Positions 64-85 are enriched in acidic residues; that stretch reads GDEDYHDGDDDVDYTDDVDDVD. The span at 90–103 shows a compositional bias: polar residues; it reads SPSQLLQGGYQRNQ.

This sequence belongs to the immunogenic miracidial antigen family.

The sequence is that of Immunogenic miracidial antigen 8I' (8I') from Schistosoma japonicum (Blood fluke).